The chain runs to 364 residues: Leucine dehydrogenase (364 aa).

Lys80 is an active-site residue. NAD(+) is bound at residue 180-186 (GVGNVAY).

This sequence belongs to the Glu/Leu/Phe/Val dehydrogenases family.

The enzyme catalyses L-leucine + NAD(+) + H2O = 4-methyl-2-oxopentanoate + NH4(+) + NADH + H(+). Its pathway is amino-acid degradation; L-leucine degradation; 4-methyl-2-oxopentanoate from L-leucine (dehydrogenase route): step 1/1. Its function is as follows. Catalyzes the reversible deamination of L-leucine to 4-methyl-2-oxopentanoate. The chain is Leucine dehydrogenase (yqiT) from Bacillus subtilis (strain 168).